The sequence spans 307 residues: Acetyl-coenzyme A carboxylase carboxyl transferase subunit beta (307 aa).

The region spanning 25–294 is the CoA carboxyltransferase N-terminal domain; it reads VWTKCTSCEQ…PLVVPIEQPK (270 aa). Zn(2+)-binding residues include cysteine 29, cysteine 32, cysteine 48, and cysteine 51. Residues 29–51 form a C4-type zinc finger; that stretch reads CTSCEQVLYHADLERNLEVCPKC.

This sequence belongs to the AccD/PCCB family. As to quaternary structure, acetyl-CoA carboxylase is a heterohexamer composed of biotin carboxyl carrier protein (AccB), biotin carboxylase (AccC) and two subunits each of ACCase subunit alpha (AccA) and ACCase subunit beta (AccD). Zn(2+) is required as a cofactor.

It localises to the cytoplasm. It carries out the reaction N(6)-carboxybiotinyl-L-lysyl-[protein] + acetyl-CoA = N(6)-biotinyl-L-lysyl-[protein] + malonyl-CoA. Its pathway is lipid metabolism; malonyl-CoA biosynthesis; malonyl-CoA from acetyl-CoA: step 1/1. In terms of biological role, component of the acetyl coenzyme A carboxylase (ACC) complex. Biotin carboxylase (BC) catalyzes the carboxylation of biotin on its carrier protein (BCCP) and then the CO(2) group is transferred by the transcarboxylase to acetyl-CoA to form malonyl-CoA. In Photobacterium profundum (strain SS9), this protein is Acetyl-coenzyme A carboxylase carboxyl transferase subunit beta.